A 1256-amino-acid chain; its full sequence is SNF2 domain-containing protein CLASSY 1 (1256 aa).

Disordered regions lie at residues 269–290 (ELRR…EIQP) and 448–467 (GNVV…VSRE). Basic and acidic residues predominate over residues 278-290 (GRPERYGDSEIQP). Over residues 451 to 463 (VHKRNGPHSRIRS) the composition is skewed to basic residues. The 200-residue stretch at 699 to 898 (DPSSDKIGGC…FNTLCLARPK (200 aa)) folds into the Helicase ATP-binding domain. 712 to 719 (HTPGAGKT) is a binding site for ATP. Positions 849–852 (DEGH) match the DEAH box motif. Residues 1061-1222 (FVLNLVFRVV…EFVEDPSQWQ (162 aa)) form the Helicase C-terminal domain.

It belongs to the helicase family. In terms of assembly, interacts with NRPD1, NRPD3 and SHH1.

It is found in the nucleus. The protein localises to the nucleoplasm. The protein resides in the nucleolus. Functionally, probable chromatin remodeling factor. Required for the initial establishment of DNA methylation and for accumulation of 24-nt siRNAs. May act on RNA templates by remodeling ribonucleoprotein structures and thereby influencing the availability of the RNA to polymerases. This chain is SNF2 domain-containing protein CLASSY 1 (CLSY1), found in Arabidopsis thaliana (Mouse-ear cress).